The chain runs to 373 residues: Type 2 DNA topoisomerase 6 subunit A (373 aa).

Residues 15-153 (QGDTLAKERL…FHMRPEEDGA (139 aa)) form the Topo IIA-type catalytic domain. Tyr110 serves as the catalytic O-(5'-phospho-DNA)-tyrosine intermediate. Mg(2+) contacts are provided by Glu206 and Asp258.

Belongs to the TOP6A family. In terms of assembly, homodimer. Heterotetramer of two Top6A and two Top6B chains. Mg(2+) serves as cofactor.

The enzyme catalyses ATP-dependent breakage, passage and rejoining of double-stranded DNA.. Relaxes both positive and negative superturns and exhibits a strong decatenase activity. This chain is Type 2 DNA topoisomerase 6 subunit A, found in Methanosarcina acetivorans (strain ATCC 35395 / DSM 2834 / JCM 12185 / C2A).